The sequence spans 264 residues: NFAT activation molecule 1 (264 aa).

The signal sequence occupies residues 1 to 37 (MESWLLRRGARVRCLHPPSWLPAWCFLCLLPVPQTLQ). Topologically, residues 38-159 (LTGLVSLTHT…QPPAFKVQEA (122 aa)) are extracellular. Residues 49–145 (LPIMVSLANT…QSDGVVILVR (97 aa)) form the Ig-like V-type domain. Residues Cys-64 and Cys-110 are joined by a disulfide bond. N-linked (GlcNAc...) asparagine glycans are attached at residues Asn-105 and Asn-118. Residues 160–180 (LMLGFTSLMSVLGVLGTALLL) form a helical membrane-spanning segment. Residues 181-264 (WKKKQISVLG…NEFNLVYENL (84 aa)) are Cytoplasmic-facing. The ITAM domain maps to 212–232 (ESVYTSLQRRETEVYACMKEE). A phosphotyrosine mark is found at Tyr-215 and Tyr-226.

No direct interaction with the B-cell antigen receptor (BCR). Interacts with SYK; probably involved in BCR signaling. Interacts with ZAP70. Post-translationally, N-glycosylated. Highly expressed in the spleen, expressed by both B- and CD4+ and CD8+ T-cells, as well as non-T- and non-B-cells, including macrophages and neutrophils. Expressed at low levels, if any, in non-immune tissue.

The protein localises to the cell membrane. In terms of biological role, may function in immune system as a receptor which activates via the calcineurin/NFAT-signaling pathway the downstream cytokine gene promoters. Activates the transcription of IL-13 and TNF-alpha promoters. May be involved in the regulation of B-cell, but not T-cell, development. This Mus musculus (Mouse) protein is NFAT activation molecule 1 (Nfam1).